Here is a 256-residue protein sequence, read N- to C-terminus: Small ribosomal subunit protein uS3 (256 aa).

The 83-residue stretch at I39–T121 folds into the KH type-2 domain. Residues R227–A256 form a disordered region. A compositionally biased stretch (basic and acidic residues) spans P246–A256.

This sequence belongs to the universal ribosomal protein uS3 family. Part of the 30S ribosomal subunit. Forms a tight complex with proteins S10 and S14.

Binds the lower part of the 30S subunit head. Binds mRNA in the 70S ribosome, positioning it for translation. In Synechococcus sp. (strain JA-2-3B'a(2-13)) (Cyanobacteria bacterium Yellowstone B-Prime), this protein is Small ribosomal subunit protein uS3.